Consider the following 40-residue polypeptide: Dolichyl-diphosphooligosaccharide--protein glycosyltransferase subunit 4 (40 aa).

The Lumenal segment spans residues 1-4; that stretch reads MISD. The chain crosses the membrane as a helical span at residues 5–25; the sequence is VQLAIFSNVLGVFLFLLVVAY. Over 26-40 the chain is Cytoplasmic; it reads HYINANTGKPSAKAK.

The protein belongs to the OST4 family. Component of the oligosaccharyltransferase (OST) complex.

Its subcellular location is the endoplasmic reticulum membrane. Subunit of the oligosaccharyl transferase (OST) complex that catalyzes the initial transfer of a defined glycan (Glc(3)Man(9)GlcNAc(2) in eukaryotes) from the lipid carrier dolichol-pyrophosphate to an asparagine residue within an Asn-X-Ser/Thr consensus motif in nascent polypeptide chains, the first step in protein N-glycosylation. N-glycosylation occurs cotranslationally and the complex associates with the Sec61 complex at the channel-forming translocon complex that mediates protein translocation across the endoplasmic reticulum (ER). All subunits are required for a maximal enzyme activity. In Drosophila yakuba (Fruit fly), this protein is Dolichyl-diphosphooligosaccharide--protein glycosyltransferase subunit 4.